The sequence spans 250 residues: Large ribosomal subunit protein uL30 (250 aa).

It belongs to the universal ribosomal protein uL30 family.

This Yarrowia lipolytica (strain CLIB 122 / E 150) (Yeast) protein is Large ribosomal subunit protein uL30 (RPL7).